Reading from the N-terminus, the 128-residue chain is MRYAIMVTGPAYGAQQASSALQFAHALLNEGHELISVFFYREGVYNANLLTSPAGDEYDLVRAWQKLNTQHGVALNICVAAALRRGIIDDTEADRLGLPSANLQPGFTLSGLGALAEASLTCDRVVQF.

Residue cysteine 78 is the Cysteine persulfide intermediate of the active site.

Belongs to the DsrE/TusD family. In terms of assembly, heterohexamer, formed by a dimer of trimers. The hexameric TusBCD complex contains 2 copies each of TusB, TusC and TusD. The TusBCD complex interacts with TusE.

The protein resides in the cytoplasm. Part of a sulfur-relay system required for 2-thiolation of 5-methylaminomethyl-2-thiouridine (mnm(5)s(2)U) at tRNA wobble positions. Accepts sulfur from TusA and transfers it in turn to TusE. In Salmonella arizonae (strain ATCC BAA-731 / CDC346-86 / RSK2980), this protein is Sulfurtransferase TusD.